Consider the following 814-residue polypeptide: Ubiquitin carboxyl-terminal hydrolase 45 (814 aa).

The segment covering 1-14 has biased composition (basic and acidic residues); it reads MRVKDPTKALPEKA. Positions 1–28 are disordered; it reads MRVKDPTKALPEKAKRSKRPTVPHDEDS. Residues 1 to 62 are interaction with ERCC1; it reads MRVKDPTKAL…AIAENLWSVC (62 aa). A phosphoserine mark is found at S28 and S29. The UBP-type zinc finger occupies 36–153; it reads LTCQHVSHAI…AQIVDFLQKH (118 aa). Zn(2+)-binding residues include C38, H40, C62, C65, C85, C88, C93, H101, H105, H114, C127, and C130. The USP domain occupies 190-813; it reads RGITNLGNTC…QAYLLFYERV (624 aa). C199 serves as the catalytic Nucleophile. Disordered stretches follow at residues 418–443 and 479–533; these read IENI…IHDR and ESRL…PDGP. A compositionally biased stretch (basic and acidic residues) spans 432-443; sequence SSKDKSQLIHDR. 2 positions are modified to phosphoserine: S508 and S526. Positions 515 to 527 are enriched in polar residues; it reads KQTGLFRSSSGSG. H746 serves as the catalytic Proton acceptor.

Belongs to the peptidase C19 family. As to quaternary structure, interacts with ERCC1. The catalytically active form interacts with SPDL1. Widely expressed. High expression is detected in the cerebellum. In the eye, it is expressed at high levels in the optic nerve, sclera and retina, with relatively low levels in the choroid, lens and retinal pigment epithelium.

The protein resides in the photoreceptor inner segment. It is found in the cytoplasm. Its subcellular location is the nucleus. It carries out the reaction Thiol-dependent hydrolysis of ester, thioester, amide, peptide and isopeptide bonds formed by the C-terminal Gly of ubiquitin (a 76-residue protein attached to proteins as an intracellular targeting signal).. In terms of biological role, catalyzes the deubiquitination of SPDL1. Plays a role in the repair of UV-induced DNA damage via deubiquitination of ERCC1, promoting its recruitment to DNA damage sites. May be involved in the maintenance of photoreceptor function. May play a role in normal retinal development. Plays a role in cell migration. This is Ubiquitin carboxyl-terminal hydrolase 45 (USP45) from Homo sapiens (Human).